The chain runs to 150 residues: Holo-[acyl-carrier-protein] synthase (150 aa).

Residues D8 and E57 each coordinate Mg(2+).

The protein belongs to the P-Pant transferase superfamily. AcpS family. It depends on Mg(2+) as a cofactor.

It is found in the cytoplasm. It carries out the reaction apo-[ACP] + CoA = holo-[ACP] + adenosine 3',5'-bisphosphate + H(+). Transfers the 4'-phosphopantetheine moiety from coenzyme A to a Ser of acyl-carrier-protein. In Jannaschia sp. (strain CCS1), this protein is Holo-[acyl-carrier-protein] synthase.